The following is a 356-amino-acid chain: Gluconolactonase (356 aa).

The segment at residues 1-35 (MTTGRMSRRECLSAAVMVPIAAMTATATITGSAQA) is a signal peptide (tat-type signal).

Homodimer. Post-translationally, predicted to be exported by the Tat system. The position of the signal peptide cleavage has been experimentally proven.

It is found in the periplasm. The catalysed reaction is D-glucono-1,5-lactone + H2O = D-gluconate + H(+). It functions in the pathway carbohydrate acid metabolism; D-gluconate biosynthesis; D-gluconate from D-glucono-1,5-lactone: step 1/1. Its function is as follows. Hydrolyzes the gluconolactone formed by glucose-fructose oxidoreductase, and that formed in aerobic conditions by the glucose dehydrogenase present. This chain is Gluconolactonase (gnl), found in Zymomonas mobilis subsp. mobilis (strain ATCC 31821 / ZM4 / CP4).